The primary structure comprises 613 residues: Dihydroxy-acid dehydratase (613 aa).

D81 is a binding site for Mg(2+). [2Fe-2S] cluster is bound at residue C122. Positions 123 and 124 each coordinate Mg(2+). At K124 the chain carries N6-carboxylysine. Residue C193 participates in [2Fe-2S] cluster binding. Residue E489 participates in Mg(2+) binding. The active-site Proton acceptor is the S515.

This sequence belongs to the IlvD/Edd family. As to quaternary structure, homodimer. Requires [2Fe-2S] cluster as cofactor. Mg(2+) serves as cofactor.

The enzyme catalyses (2R)-2,3-dihydroxy-3-methylbutanoate = 3-methyl-2-oxobutanoate + H2O. It carries out the reaction (2R,3R)-2,3-dihydroxy-3-methylpentanoate = (S)-3-methyl-2-oxopentanoate + H2O. It functions in the pathway amino-acid biosynthesis; L-isoleucine biosynthesis; L-isoleucine from 2-oxobutanoate: step 3/4. Its pathway is amino-acid biosynthesis; L-valine biosynthesis; L-valine from pyruvate: step 3/4. In terms of biological role, functions in the biosynthesis of branched-chain amino acids. Catalyzes the dehydration of (2R,3R)-2,3-dihydroxy-3-methylpentanoate (2,3-dihydroxy-3-methylvalerate) into 2-oxo-3-methylpentanoate (2-oxo-3-methylvalerate) and of (2R)-2,3-dihydroxy-3-methylbutanoate (2,3-dihydroxyisovalerate) into 2-oxo-3-methylbutanoate (2-oxoisovalerate), the penultimate precursor to L-isoleucine and L-valine, respectively. This chain is Dihydroxy-acid dehydratase, found in Pseudomonas putida (strain ATCC 700007 / DSM 6899 / JCM 31910 / BCRC 17059 / LMG 24140 / F1).